The chain runs to 95 residues: Signal recognition particle 19 kDa protein (95 aa).

This sequence belongs to the SRP19 family. Part of the signal recognition particle protein translocation system, which is composed of SRP and FtsY. Archaeal SRP consists of a 7S RNA molecule of 300 nucleotides and two protein subunits: SRP54 and SRP19.

It is found in the cytoplasm. Its function is as follows. Involved in targeting and insertion of nascent membrane proteins into the cytoplasmic membrane. Binds directly to 7S RNA and mediates binding of the 54 kDa subunit of the SRP. This Desulfurococcus amylolyticus (strain DSM 18924 / JCM 16383 / VKM B-2413 / 1221n) (Desulfurococcus kamchatkensis) protein is Signal recognition particle 19 kDa protein.